The following is a 397-amino-acid chain: Elongation factor Tu (397 aa).

In terms of domain architecture, tr-type G spans 10–206; sequence KPHVNIGTIG…AVDEYIPTPE (197 aa). Residues 19–26 form a G1 region; the sequence is GHIDHGKT. GTP is bound at residue 19–26; sequence GHIDHGKT. Position 26 (T26) interacts with Mg(2+). A G2 region spans residues 62 to 66; sequence GITIS. The interval 83-86 is G3; sequence DCPG. GTP-binding positions include 83-87 and 138-141; these read DCPGH and NKCD. A G4 region spans residues 138-141; it reads NKCD. The interval 176–178 is G5; that stretch reads AAF.

This sequence belongs to the TRAFAC class translation factor GTPase superfamily. Classic translation factor GTPase family. EF-Tu/EF-1A subfamily. As to quaternary structure, monomer.

The protein localises to the cytoplasm. It catalyses the reaction GTP + H2O = GDP + phosphate + H(+). Its function is as follows. GTP hydrolase that promotes the GTP-dependent binding of aminoacyl-tRNA to the A-site of ribosomes during protein biosynthesis. This is Elongation factor Tu from Nocardioides sp. (strain ATCC BAA-499 / JS614).